Here is a 424-residue protein sequence, read N- to C-terminus: UPF0229 protein YPTS_2141 (424 aa).

Positions 84–109 (TNDRVDRPQGGGGGGSGQGNAGKDGE) are disordered. Over residues 92 to 105 (QGGGGGGSGQGNAG) the composition is skewed to gly residues.

The protein belongs to the UPF0229 family.

This is UPF0229 protein YPTS_2141 from Yersinia pseudotuberculosis serotype IB (strain PB1/+).